Reading from the N-terminus, the 631-residue chain is Phosphomethylpyrimidine synthase (631 aa).

Substrate is bound by residues asparagine 239, methionine 268, tyrosine 297, histidine 333, 353 to 355, 394 to 397, and glutamate 433; these read SRG and DGLR. Histidine 437 lines the Zn(2+) pocket. A substrate-binding site is contributed by tyrosine 460. Residue histidine 501 coordinates Zn(2+). Cysteine 581, cysteine 584, and cysteine 589 together coordinate [4Fe-4S] cluster.

Belongs to the ThiC family. As to quaternary structure, homodimer. It depends on [4Fe-4S] cluster as a cofactor.

The enzyme catalyses 5-amino-1-(5-phospho-beta-D-ribosyl)imidazole + S-adenosyl-L-methionine = 4-amino-2-methyl-5-(phosphooxymethyl)pyrimidine + CO + 5'-deoxyadenosine + formate + L-methionine + 3 H(+). It functions in the pathway cofactor biosynthesis; thiamine diphosphate biosynthesis. Functionally, catalyzes the synthesis of the hydroxymethylpyrimidine phosphate (HMP-P) moiety of thiamine from aminoimidazole ribotide (AIR) in a radical S-adenosyl-L-methionine (SAM)-dependent reaction. This Salmonella typhi protein is Phosphomethylpyrimidine synthase.